The following is a 180-amino-acid chain: uncharacterized protein (180 aa).

One can recognise a Nudix hydrolase domain in the interval 35–163 (LRHRATYIVV…TPDSLKALAL (129 aa)). A Nudix box motif is present at residues 72–94 (GGVVQADEQLLESARREAEEELG). Glu88 and Glu92 together coordinate Mg(2+).

It belongs to the Nudix hydrolase family. Mg(2+) is required as a cofactor.

This is an uncharacterized protein from Escherichia coli O157:H7.